A 324-amino-acid polypeptide reads, in one-letter code: Putative ribose-phosphate pyrophosphokinase 1 (324 aa).

ATP-binding positions include 43 to 45 and 102 to 103; these read DGE and RQ. Residue His136 coordinates Mg(2+). D-ribose 5-phosphate contacts are provided by residues Asp225 and 229 to 233; that span reads NTGQT.

This sequence belongs to the ribose-phosphate pyrophosphokinase family. Class I subfamily. In terms of assembly, homohexamer. Mg(2+) is required as a cofactor.

The protein resides in the cytoplasm. The catalysed reaction is D-ribose 5-phosphate + ATP = 5-phospho-alpha-D-ribose 1-diphosphate + AMP + H(+). It functions in the pathway metabolic intermediate biosynthesis; 5-phospho-alpha-D-ribose 1-diphosphate biosynthesis; 5-phospho-alpha-D-ribose 1-diphosphate from D-ribose 5-phosphate (route I): step 1/1. Involved in the biosynthesis of the central metabolite phospho-alpha-D-ribosyl-1-pyrophosphate (PRPP) via the transfer of pyrophosphoryl group from ATP to 1-hydroxyl of ribose-5-phosphate (Rib-5-P). The sequence is that of Putative ribose-phosphate pyrophosphokinase 1 from Enterococcus faecalis (strain ATCC 700802 / V583).